We begin with the raw amino-acid sequence, 526 residues long: Methyltetrahydroprotoberberine 14-monooxygenase (526 aa).

The helical transmembrane segment at 14–34 (LLLQYLQPISVALVVIALVWN) threads the bilayer. Cys-468 provides a ligand contact to heme.

The protein belongs to the cytochrome P450 family. The cofactor is heme. As to expression, mainly expressed in roots, and barely in stems, leaves and carpels.

It is found in the membrane. It catalyses the reaction (S)-cis-N-methylcanadine + reduced [NADPH--hemoprotein reductase] + O2 = allocryptopine + oxidized [NADPH--hemoprotein reductase] + H2O + 2 H(+). The enzyme catalyses (S)-cis-N-methylstylopine + reduced [NADPH--hemoprotein reductase] + O2 = protopine + oxidized [NADPH--hemoprotein reductase] + H2O + 2 H(+). The catalysed reaction is (S)-cis-N-methyltetrahydrothalifendine + reduced [NADPH--hemoprotein reductase] + O2 = 7-hydroxy-8-methoxy-11-methyl-17,19-dioxa-11-azatetracyclo[12.7.0.0(4,9).0(16,20)]henicosa-1(21),4(9),5,7,14,16(20)-hexaen-2-one + oxidized [NADPH--hemoprotein reductase] + H2O + 2 H(+). It carries out the reaction (S)-cis-N-methyltetrahydropalmatine + reduced [NADPH--hemoprotein reductase] + O2 = muramine + oxidized [NADPH--hemoprotein reductase] + H2O + 2 H(+). It functions in the pathway alkaloid biosynthesis. Its activity is regulated as follows. Repressed by cytochrome P450 inhibitors ketoconazole, metyrapone, prochloraz, ancymidol and cytochrome C. Its function is as follows. Involved in the biosynthesis of the isoquinoline alkaloid sanguinarine. Catalyzes the conversion of N-methylated protoberberine alkaloids N-methylstylopine and N-methylcanadine into protopine and allocryptopine, respectively. Can also use (S)-cis-N-methyltetrahydrothalifendine and (S)-cis-N-methyltetrahydropalmatine as substrates. The chain is Methyltetrahydroprotoberberine 14-monooxygenase from Papaver somniferum (Opium poppy).